A 781-amino-acid polypeptide reads, in one-letter code: Lon protease (781 aa).

A Lon N-terminal domain is found at 16–214 (ANVLVTRGIV…KILSFTIDER (199 aa)). 365–372 (GPPGVGKT) contributes to the ATP binding site. The region spanning 601 to 781 (EYMPGVVNGM…YDDVYNRLFK (181 aa)) is the Lon proteolytic domain. Catalysis depends on residues Ser-688 and Lys-731.

Belongs to the peptidase S16 family. As to quaternary structure, homohexamer. Organized in a ring with a central cavity.

It is found in the cytoplasm. The catalysed reaction is Hydrolysis of proteins in presence of ATP.. Functionally, ATP-dependent serine protease that mediates the selective degradation of mutant and abnormal proteins as well as certain short-lived regulatory proteins. Required for cellular homeostasis and for survival from DNA damage and developmental changes induced by stress. Degrades polypeptides processively to yield small peptide fragments that are 5 to 10 amino acids long. Binds to DNA in a double-stranded, site-specific manner. This is Lon protease from Malacoplasma penetrans (strain HF-2) (Mycoplasma penetrans).